Here is a 308-residue protein sequence, read N- to C-terminus: Oxygen-dependent coproporphyrinogen-III oxidase (308 aa).

Ser97 serves as a coordination point for substrate. The a divalent metal cation site is built by His101 and His111. Catalysis depends on His111, which acts as the Proton donor. 113-115 (NVR) contacts substrate. A divalent metal cation is bound by residues His153 and His183. The important for dimerization stretch occupies residues 248 to 283 (YVEFNLVWDRGTHFGLQSGGRTESILMSMPPLASWS). 266–268 (GGR) contacts substrate.

Belongs to the aerobic coproporphyrinogen-III oxidase family. Homodimer. It depends on a divalent metal cation as a cofactor.

It localises to the cytoplasm. It catalyses the reaction coproporphyrinogen III + O2 + 2 H(+) = protoporphyrinogen IX + 2 CO2 + 2 H2O. The protein operates within porphyrin-containing compound metabolism; protoporphyrin-IX biosynthesis; protoporphyrinogen-IX from coproporphyrinogen-III (O2 route): step 1/1. Its function is as follows. Involved in the heme biosynthesis. Catalyzes the aerobic oxidative decarboxylation of propionate groups of rings A and B of coproporphyrinogen-III to yield the vinyl groups in protoporphyrinogen-IX. The sequence is that of Oxygen-dependent coproporphyrinogen-III oxidase from Polaromonas sp. (strain JS666 / ATCC BAA-500).